Here is a 121-residue protein sequence, read N- to C-terminus: Small ribosomal subunit protein uS13 (121 aa).

A disordered region spans residues 98–121; the sequence is RGQKTRNNAHTVKGKPKSIAGKKK. Residues 109–121 show a composition bias toward basic residues; that stretch reads VKGKPKSIAGKKK.

The protein belongs to the universal ribosomal protein uS13 family. In terms of assembly, part of the 30S ribosomal subunit. Forms a loose heterodimer with protein S19. Forms two bridges to the 50S subunit in the 70S ribosome.

Its function is as follows. Located at the top of the head of the 30S subunit, it contacts several helices of the 16S rRNA. In the 70S ribosome it contacts the 23S rRNA (bridge B1a) and protein L5 of the 50S subunit (bridge B1b), connecting the 2 subunits; these bridges are implicated in subunit movement. Contacts the tRNAs in the A and P-sites. In Phytoplasma australiense, this protein is Small ribosomal subunit protein uS13.